The sequence spans 173 residues: CKLF-like MARVEL transmembrane domain-containing protein 8 (173 aa).

In terms of domain architecture, MARVEL spans Phe-36–Arg-168. 4 consecutive transmembrane segments (helical) span residues Leu-40–Ala-60, Phe-70–Ile-90, Thr-105–Val-125, and Phe-147–Trp-167.

The protein belongs to the chemokine-like factor family. Highly expressed in liver and pancreas.

It is found in the membrane. Its subcellular location is the cytoplasm. The protein localises to the nucleus. This is CKLF-like MARVEL transmembrane domain-containing protein 8 (CMTM8) from Homo sapiens (Human).